A 739-amino-acid chain; its full sequence is Catalase-peroxidase (739 aa).

The disordered stretch occupies residues 1–33 (MSVEHPPIGEANTEPAAGGCPVTGRLRHPLQGG). The tryptophyl-tyrosyl-methioninium (Trp-Tyr) (with M-255) cross-link spans 106–229 (WHSAGTYRSS…LAAVQMGLIY (124 aa)). His107 serves as the catalytic Proton acceptor. The interval 113–134 (RSSDGRGGANTGQQRFAPLNSW) is disordered. A cross-link (tryptophyl-tyrosyl-methioninium (Tyr-Met) (with W-106)) is located at residues 229–255 (YVNPEGPNGNPDPLAAAVDIKDTFGRM). Heme b is bound at residue His270.

It belongs to the peroxidase family. Peroxidase/catalase subfamily. In terms of assembly, homodimer or homotetramer. Requires heme b as cofactor. In terms of processing, formation of the three residue Trp-Tyr-Met cross-link is important for the catalase, but not the peroxidase activity of the enzyme.

The catalysed reaction is H2O2 + AH2 = A + 2 H2O. The enzyme catalyses 2 H2O2 = O2 + 2 H2O. Bifunctional enzyme with both catalase and broad-spectrum peroxidase activity. In Nocardia farcinica (strain IFM 10152), this protein is Catalase-peroxidase.